A 624-amino-acid chain; its full sequence is ADP,ATP carrier protein 1, chloroplastic (624 aa).

The transit peptide at 1–79 (MEAVIQTRGL…KERSTEFICK (79 aa)) directs the protein to the chloroplast. Ala80 bears the N-acetylalanine mark. The next 6 helical transmembrane spans lie at 108-128 (VEVATLKKIIPLGLMFFCILF), 182-202 (ALFYTVIVPFIIYFGAFGFVM), 240-260 (LFYVMAELWGSVVVSVLFWGF), 315-335 (AMMSIVVGMGLAICLLYWWVN), 446-466 (LLTGVAFFSLILFGGPFAPLV), and 545-565 (LANSTPYLGMILLVIVTAWLA). The disordered stretch occupies residues 579 to 624 (SEEELEKEMERASSVKIPVVSQDESGNGSLGESPSSSPEKSAPTNL). Over residues 602 to 624 (ESGNGSLGESPSSSPEKSAPTNL) the composition is skewed to low complexity.

Belongs to the ADP/ATP translocase tlc (TC 2.A.12.2) family.

It localises to the plastid. It is found in the chloroplast membrane. Its function is as follows. May function as an ATP importer. The sequence is that of ADP,ATP carrier protein 1, chloroplastic (AATP1) from Arabidopsis thaliana (Mouse-ear cress).